The primary structure comprises 1218 residues: NACHT, LRR and PYD domains-containing protein 1a allele 3 (1218 aa).

Residues 1 to 29 (MGESQSKQESNTRVAQHGSQQDVDPTFQT) show a composition bias toward polar residues. 2 disordered regions span residues 1–44 (MGES…QVEQ) and 71–91 (EMDHESRRHSHQSKKKLDRSE). Positions 77 to 87 (RRHSHQSKKKL) are enriched in basic residues. Residues 175–484 (QLVIIEGAAG…EFFAAMSYIL (310 aa)) enclose the NACHT domain. 181–188 (GAAGIGKS) provides a ligand contact to ATP. LRR repeat units lie at residues 343–364 (KERNTIIDFNLIGSIPVLLTLC), 673–693 (NLEELDLSGNPLSYSAVRSLC), and 730–750 (RLAELDLRLNDLGDNGVRQLC). The span at 799 to 815 (TMPTENTDGEESLTSSK) shows a compositional bias: polar residues. The interval 799 to 842 (TMPTENTDGEESLTSSKQQQQQSGDKHMEPLGTDDDFWGPSGPV) is disordered. The ZU5 stretch occupies residues 835–968 (FWGPSGPVST…HFAVLENPSF (134 aa)). Positions 835-1118 (FWGPSGPVST…LRPALPRMAS (284 aa)) constitute an FIIND domain. Residues 969–1118 (SPMGVLLRMI…LRPALPRMAS (150 aa)) are UPA. In terms of domain architecture, CARD spans 1122–1211 (DAPALLHFVD…HLIMDLLEKS (90 aa)).

This sequence belongs to the NLRP family. In terms of assembly, interacts (via LRR repeats) with BCL2 and BCL2L1 (via the loop between motifs BH4 and BH3). Interacts with NOD2; this interaction is enhanced in the presence of muramyl dipeptide (MDP) and increases IL1B release. Interacts with EIF2AK2/PKR; this interaction requires EIF2AK2 activity, is accompanied by EIF2AK2 autophosphorylation and promotes inflammasome assembly in response to danger-associated signals. Interacts with MEFV; this interaction targets Nlrp1a to degradation by autophagy, hence preventing excessive IL1B- and IL18-mediated inflammation. Interacts with DPP9; leading to inhibit activation of the inflammasome. DPP9 acts via formation of a ternary complex, composed of a DPP9 homodimer, one full-length NLRP1 protein, and one cleaved C-terminus of Nlrp1a (NACHT, LRR and PYD domains-containing protein 1a, C-terminus). Interacts with DPP8; leading to inhibit activation of the inflammasome, probably via formation of a ternary complex with DPP8. Interacts with the C-terminal part of Nlrp1a (NACHT, LRR and PYD domains-containing protein 1a, C-terminus) in absence of pathogens and other damage-associated signals. As to quaternary structure, interacts with the N-terminal part of Nlrp1a (NACHT, LRR and PYD domains-containing protein 1a, N-terminus) in absence of pathogens and other damage-associated signals. Homomultimer; forms the Nlrp1a inflammasome polymeric complex, a filament composed of homopolymers of this form in response to pathogens and other damage-associated signals. The Nlrp1a inflammasome polymeric complex directly recruits pro-caspase-1 (proCASP1) independently of PYCARD/ASC. Interacts (via CARD domain) with CASP1 (via CARD domain); leading to CASP1 activation. Autocatalytically cleaved. Autocatalytic cleavage in FIIND region occurs constitutively, prior to activation signals, and is required for inflammasome activity (IL1B release), possibly by facilitating CASP1 binding. Both N- and C-terminal parts remain associated non-covalently. Post-translationally, ubiquitinated in response to pathogen-associated signals, leading to its degradation by the proteasome and subsequent release of the cleaved C-terminal part of the protein (NACHT, LRR and PYD domains-containing protein 1a, C-terminus), which polymerizes and forms the Nlrp1a inflammasome.

It is found in the cytoplasm. It localises to the cytosol. Its subcellular location is the nucleus. The protein resides in the inflammasome. Activated by pathogens and other damage-associated signals: activation promotes ubiquitination and degradation of the N-terminal part, releasing the cleaved C-terminal part of the protein (NACHT, LRR and PYD domains-containing protein 1a, C-terminus), which polymerizes and forms the Nlrp1a inflammasome. Nlrp1a inflammasome is inhibited by DPP8 and DPP9, which sequester the C-terminal fragment of Nlrp1a (NACHT, LRR and PYD domains-containing protein 1a, C-terminus) in a ternary complex, thereby preventing Nlrp1a oligomerization and activation. Nlrp1a inflammasome is strongly activated by Val-boroPro (Talabostat, PT-100), an inhibitor of dipeptidyl peptidases DPP8 and DPP9. Val-boroPro relieves inhibition of DPP8 and/or DPP9 by promoting disruption of the ternary complex, releasing its C-terminal part from autoinhibition. Not activated by cleavage by B.anthracis lethal toxin (LT) endopeptidase. Acts as the sensor component of the Nlrp1a inflammasome, which mediates inflammasome activation in response to various pathogen-associated signals, leading to subsequent pyroptosis. Inflammasomes are supramolecular complexes that assemble in the cytosol in response to pathogens and other damage-associated signals and play critical roles in innate immunity and inflammation. Acts as a recognition receptor (PRR): recognizes specific pathogens and other damage-associated signals, such as Val-boroPro inhibitor, and mediates the formation of the inflammasome polymeric complex. In response to pathogen-associated signals, the N-terminal part of Nlrp1a is degraded by the proteasome, releasing the cleaved C-terminal part of the protein (NACHT, LRR and PYD domains-containing protein 1a, C-terminus), which polymerizes to initiate the formation of the inflammasome complex: the inflammasome directly recruits pro-caspase-1 (proCASP1) independently of PYCARD/ASC and promotes caspase-1 (CASP1) activation, which subsequently cleaves and activates inflammatory cytokines IL1B and IL18 and gasdermin-D (GSDMD), leading to pyroptosis. In the absence of GSDMD expression, the Nlrp1a inflammasome is able to recruit and activate CASP8, leading to activation of gasdermin-E (GSDME). In terms of biological role, constitutes the precursor of the Nlrp1a inflammasome, which mediates autoproteolytic processing within the FIIND domain to generate the N-terminal and C-terminal parts, which are associated non-covalently in absence of pathogens and other damage-associated signals. Its function is as follows. Regulatory part that prevents formation of the Nlrp1a inflammasome: in absence of pathogens and other damage-associated signals, interacts with the C-terminal part of Nlrp1a (NACHT, LRR and PYD domains-containing protein 1a, C-terminus), preventing activation of the Nlrp1a inflammasome. In response to pathogen-associated signals, this part is ubiquitinated by the N-end rule pathway and degraded by the proteasome, releasing the cleaved C-terminal part of the protein, which polymerizes and forms the Nlrp1a inflammasome. Functionally, constitutes the active part of the Nlrp1a inflammasome. In absence of pathogens and other damage-associated signals, interacts with the N-terminal part of Nlrp1a (NACHT, LRR and PYD domains-containing protein 1a, N-terminus), preventing activation of the Nlrp1a inflammasome. In response to pathogen-associated signals, the N-terminal part of Nlrp1a is degraded by the proteasome, releasing this form, which polymerizes to form the Nlrp1a inflammasome complex: the Nlrp1a inflammasome complex then directly recruits pro-caspase-1 (proCASP1) and promotes caspase-1 (CASP1) activation, leading to gasdermin-D (GSDMD) cleavage and subsequent pyroptosis. The polypeptide is NACHT, LRR and PYD domains-containing protein 1a allele 3 (Rattus norvegicus (Rat)).